The primary structure comprises 201 residues: Large ribosomal subunit protein uL4 (201 aa).

The interval 45–72 is disordered; the sequence is AQKTRAEVTGSGKKPWRQKGTGRARAGS.

Belongs to the universal ribosomal protein uL4 family. Part of the 50S ribosomal subunit.

Functionally, one of the primary rRNA binding proteins, this protein initially binds near the 5'-end of the 23S rRNA. It is important during the early stages of 50S assembly. It makes multiple contacts with different domains of the 23S rRNA in the assembled 50S subunit and ribosome. Forms part of the polypeptide exit tunnel. The sequence is that of Large ribosomal subunit protein uL4 from Shewanella frigidimarina (strain NCIMB 400).